The following is a 149-amino-acid chain: MIALLQRVAHASVVVDGATVGAIDAGLMVLLCAERGDTEKEADALLAKLLSYRVFSDAAGKMNLSVVDTAGGVLLVPQFTLAADTRSGTRPSFTPAAAPDVARALFNYFVMQARSRHADIATGEFGADMKVSLTNDGPVTFWLQVKPVV.

The Gly-cisPro motif, important for rejection of L-amino acids signature appears at 137 to 138; the sequence is GP.

The protein belongs to the DTD family. Homodimer.

Its subcellular location is the cytoplasm. The enzyme catalyses glycyl-tRNA(Ala) + H2O = tRNA(Ala) + glycine + H(+). It catalyses the reaction a D-aminoacyl-tRNA + H2O = a tRNA + a D-alpha-amino acid + H(+). Its function is as follows. An aminoacyl-tRNA editing enzyme that deacylates mischarged D-aminoacyl-tRNAs. Also deacylates mischarged glycyl-tRNA(Ala), protecting cells against glycine mischarging by AlaRS. Acts via tRNA-based rather than protein-based catalysis; rejects L-amino acids rather than detecting D-amino acids in the active site. By recycling D-aminoacyl-tRNA to D-amino acids and free tRNA molecules, this enzyme counteracts the toxicity associated with the formation of D-aminoacyl-tRNA entities in vivo and helps enforce protein L-homochirality. The protein is D-aminoacyl-tRNA deacylase of Janthinobacterium sp. (strain Marseille) (Minibacterium massiliensis).